We begin with the raw amino-acid sequence, 138 residues long: Ribosome-binding factor A (138 aa).

Residues 117-138 (ERQNKPAASTEKPPVGSLDADL) form a disordered region.

It belongs to the RbfA family. As to quaternary structure, monomer. Binds 30S ribosomal subunits, but not 50S ribosomal subunits or 70S ribosomes.

Its subcellular location is the cytoplasm. Functionally, one of several proteins that assist in the late maturation steps of the functional core of the 30S ribosomal subunit. Associates with free 30S ribosomal subunits (but not with 30S subunits that are part of 70S ribosomes or polysomes). Required for efficient processing of 16S rRNA. May interact with the 5'-terminal helix region of 16S rRNA. This chain is Ribosome-binding factor A, found in Acaryochloris marina (strain MBIC 11017).